A 185-amino-acid chain; its full sequence is Ribonuclease HII (185 aa).

One can recognise an RNase H type-2 domain in the interval 1-185 (MIILGIDEAG…KSYKPIQLLL (185 aa)). 3 residues coordinate a divalent metal cation: Asp7, Glu8, and Asp99.

The protein belongs to the RNase HII family. The cofactor is Mn(2+). Mg(2+) serves as cofactor.

Its subcellular location is the cytoplasm. The enzyme catalyses Endonucleolytic cleavage to 5'-phosphomonoester.. In terms of biological role, endonuclease that specifically degrades the RNA of RNA-DNA hybrids. The polypeptide is Ribonuclease HII (Francisella philomiragia subsp. philomiragia (strain ATCC 25017 / CCUG 19701 / FSC 153 / O#319-036)).